We begin with the raw amino-acid sequence, 236 residues long: Sugar fermentation stimulation protein homolog (236 aa).

This sequence belongs to the SfsA family.

This Desulfotalea psychrophila (strain LSv54 / DSM 12343) protein is Sugar fermentation stimulation protein homolog.